The sequence spans 78 residues: Acyl carrier protein (78 aa).

A Carrier domain is found at 1 to 76 (MALFEDIQAV…DVVKYIEDNK (76 aa)). Serine 36 carries the O-(pantetheine 4'-phosphoryl)serine modification.

It belongs to the acyl carrier protein (ACP) family. 4'-phosphopantetheine is transferred from CoA to a specific serine of apo-ACP by AcpS. This modification is essential for activity because fatty acids are bound in thioester linkage to the sulfhydryl of the prosthetic group.

The protein localises to the cytoplasm. It functions in the pathway lipid metabolism; fatty acid biosynthesis. Its function is as follows. Carrier of the growing fatty acid chain in fatty acid biosynthesis. In Helicobacter pylori (strain ATCC 700392 / 26695) (Campylobacter pylori), this protein is Acyl carrier protein.